We begin with the raw amino-acid sequence, 106 residues long: Evasin P1168 (106 aa).

The first 24 residues, 1-24, serve as a signal peptide directing secretion; the sequence is MEVKISTFLQIAVLIVLGIHLIAA. 3 disulfides stabilise this stretch: C45–C67, C49–C69, and C60–C80. N-linked (GlcNAc...) asparagine glycans are attached at residues N48, N54, and N64.

Its subcellular location is the secreted. Its function is as follows. Salivary chemokine-binding protein which binds to host chemokines CXCL1, CXCL2 and CXCL8. This is Evasin P1168 from Ixodes ricinus (Common tick).